Consider the following 278-residue polypeptide: Protoheme IX farnesyltransferase (278 aa).

9 helical membrane passes run 12 to 32, 33 to 53, 83 to 103, 105 to 125, 130 to 150, 157 to 177, 204 to 224, 228 to 248, and 257 to 277; these read VIWL…QTVD, WSKL…SAAF, ALVY…YLLG, LPGL…TIWL, WLNI…GYAL, LPAV…IWAL, VIIS…YLAF, LLGL…SILA, and MWKM…ALVF.

This sequence belongs to the UbiA prenyltransferase family. Protoheme IX farnesyltransferase subfamily.

Its subcellular location is the cell membrane. It carries out the reaction heme b + (2E,6E)-farnesyl diphosphate + H2O = Fe(II)-heme o + diphosphate. The protein operates within porphyrin-containing compound metabolism; heme O biosynthesis; heme O from protoheme: step 1/1. Converts heme B (protoheme IX) to heme O by substitution of the vinyl group on carbon 2 of heme B porphyrin ring with a hydroxyethyl farnesyl side group. The chain is Protoheme IX farnesyltransferase from Pyrobaculum islandicum (strain DSM 4184 / JCM 9189 / GEO3).